A 120-amino-acid polypeptide reads, in one-letter code: Chaperonin GroEL (120 aa).

23–27 (DGTTT) contacts ATP.

Belongs to the chaperonin (HSP60) family. Forms a cylinder of 14 subunits composed of two heptameric rings stacked back-to-back. Interacts with the co-chaperonin GroES.

Its subcellular location is the cytoplasm. It carries out the reaction ATP + H2O + a folded polypeptide = ADP + phosphate + an unfolded polypeptide.. Functionally, together with its co-chaperonin GroES, plays an essential role in assisting protein folding. The GroEL-GroES system forms a nano-cage that allows encapsulation of the non-native substrate proteins and provides a physical environment optimized to promote and accelerate protein folding. The protein is Chaperonin GroEL of Mycolicibacterium rhodesiae (Mycobacterium rhodesiae).